The sequence spans 294 residues: Protoheme IX farnesyltransferase (294 aa).

A run of 9 helical transmembrane segments spans residues 22 to 42 (VTQL…PELP), 46 to 66 (IVVA…AINC), 89 to 109 (ITVP…MWVL), 116 to 136 (LTMW…TIIL), 143 to 163 (NIVI…AAVA), 170 to 190 (AWIL…ALAL), 212 to 232 (FTQF…MLPF), 234 to 254 (VGMS…IFVW), and 272 to 292 (FAYS…DHYL).

Belongs to the UbiA prenyltransferase family. Protoheme IX farnesyltransferase subfamily.

Its subcellular location is the cell inner membrane. It catalyses the reaction heme b + (2E,6E)-farnesyl diphosphate + H2O = Fe(II)-heme o + diphosphate. It functions in the pathway porphyrin-containing compound metabolism; heme O biosynthesis; heme O from protoheme: step 1/1. In terms of biological role, converts heme B (protoheme IX) to heme O by substitution of the vinyl group on carbon 2 of heme B porphyrin ring with a hydroxyethyl farnesyl side group. The polypeptide is Protoheme IX farnesyltransferase (Janthinobacterium sp. (strain Marseille) (Minibacterium massiliensis)).